The following is a 490-amino-acid chain: Glutamate--tRNA ligase (490 aa).

The short motif at 15–25 (PSPTGYLHVGG) is the 'HIGH' region element. Residues 259 to 263 (KLSKR) carry the 'KMSKS' region motif. ATP is bound at residue K262.

The protein belongs to the class-I aminoacyl-tRNA synthetase family. Glutamate--tRNA ligase type 1 subfamily. Monomer.

It localises to the cytoplasm. It carries out the reaction tRNA(Glu) + L-glutamate + ATP = L-glutamyl-tRNA(Glu) + AMP + diphosphate. Functionally, catalyzes the attachment of glutamate to tRNA(Glu) in a two-step reaction: glutamate is first activated by ATP to form Glu-AMP and then transferred to the acceptor end of tRNA(Glu). This Bdellovibrio bacteriovorus (strain ATCC 15356 / DSM 50701 / NCIMB 9529 / HD100) protein is Glutamate--tRNA ligase.